The primary structure comprises 297 residues: Aspartate carbamoyltransferase catalytic subunit (297 aa).

Carbamoyl phosphate contacts are provided by Arg-49 and Thr-50. An L-aspartate-binding site is contributed by Lys-77. Arg-99, His-129, and Gln-132 together coordinate carbamoyl phosphate. L-aspartate contacts are provided by Arg-162 and Arg-215. Gly-256 and Pro-257 together coordinate carbamoyl phosphate.

Belongs to the aspartate/ornithine carbamoyltransferase superfamily. ATCase family. Heterododecamer (2C3:3R2) of six catalytic PyrB chains organized as two trimers (C3), and six regulatory PyrI chains organized as three dimers (R2).

It catalyses the reaction carbamoyl phosphate + L-aspartate = N-carbamoyl-L-aspartate + phosphate + H(+). It participates in pyrimidine metabolism; UMP biosynthesis via de novo pathway; (S)-dihydroorotate from bicarbonate: step 2/3. Catalyzes the condensation of carbamoyl phosphate and aspartate to form carbamoyl aspartate and inorganic phosphate, the committed step in the de novo pyrimidine nucleotide biosynthesis pathway. This is Aspartate carbamoyltransferase catalytic subunit from Legionella pneumophila (strain Paris).